Consider the following 193-residue polypeptide: Ribonuclease HII (193 aa).

The 179-residue stretch at 15 to 193 (YIVAGIDEAG…PYHRRSFKCC (179 aa)) folds into the RNase H type-2 domain. Asp-21, Glu-22, and Asp-112 together coordinate a divalent metal cation.

Belongs to the RNase HII family. Mn(2+) is required as a cofactor. The cofactor is Mg(2+).

It is found in the cytoplasm. It catalyses the reaction Endonucleolytic cleavage to 5'-phosphomonoester.. Functionally, endonuclease that specifically degrades the RNA of RNA-DNA hybrids. This is Ribonuclease HII from Rickettsia felis (strain ATCC VR-1525 / URRWXCal2) (Rickettsia azadi).